Reading from the N-terminus, the 846-residue chain is ATR-interacting protein mus304 (846 aa).

Disordered regions lie at residues 20 to 40, 90 to 109, and 135 to 162; these read DVSVTRGSARPSPPRNNFDGI, QGSTSTQQMFPPPPPPQKKP, and EPQKMPEPKTSTSRITTSSISVQQKTTT. A compositionally biased stretch (low complexity) spans 144–162; sequence TSTSRITTSSISVQQKTTT. 2 coiled-coil regions span residues 168 to 240 and 327 to 359; these read ATQS…LADE and EYSENEDQTKKRRNHFELELKQLLLHYARLQAK. The EEXXXDL motif signature appears at 504-510; that stretch reads EELLFDL. Positions 651-681 are disordered; sequence GAVQGSVSNGSTSASVSNPNQNSNSSTTQRG. Residues 655–676 are compositionally biased toward low complexity; that stretch reads GSVSNGSTSASVSNPNQNSNSS.

This sequence belongs to the ATRIP family. Interacts with ATR/mei-41. As to expression, highly expressed in the oocyte and nurse cells from stage 5 onward and in embryos prior to during nuclear division 14. Then, it decreases to background levels during interphase 14. Weakly or not expressed in stage embryos and imaginal disks.

The protein resides in the cytoplasm. Functionally, DNA damage checkpoint protein required for chromosome break repair and for genomic stability during development. This Drosophila melanogaster (Fruit fly) protein is ATR-interacting protein mus304 (mus304).